The sequence spans 432 residues: Proline--tRNA ligase (432 aa).

Belongs to the class-II aminoacyl-tRNA synthetase family. ProS type 2 subfamily. As to quaternary structure, homodimer.

It is found in the cytoplasm. It catalyses the reaction tRNA(Pro) + L-proline + ATP = L-prolyl-tRNA(Pro) + AMP + diphosphate. In terms of biological role, catalyzes the attachment of proline to tRNA(Pro) in a two-step reaction: proline is first activated by ATP to form Pro-AMP and then transferred to the acceptor end of tRNA(Pro). The chain is Proline--tRNA ligase from Rickettsia prowazekii (strain Madrid E).